The primary structure comprises 548 residues: Hydroxylamine reductase (548 aa).

[4Fe-4S] cluster-binding residues include Cys3, Cys6, Cys15, and Cys21. Residues His239, Glu263, Cys307, Cys401, Cys429, Cys454, Glu489, and Lys491 each coordinate hybrid [4Fe-2O-2S] cluster. Residue Cys401 is modified to Cysteine persulfide.

The protein belongs to the HCP family. The cofactor is [4Fe-4S] cluster. Hybrid [4Fe-2O-2S] cluster serves as cofactor.

Its subcellular location is the cytoplasm. The catalysed reaction is A + NH4(+) + H2O = hydroxylamine + AH2 + H(+). Catalyzes the reduction of hydroxylamine to form NH(3) and H(2)O. This Desulfosudis oleivorans (strain DSM 6200 / JCM 39069 / Hxd3) (Desulfococcus oleovorans) protein is Hydroxylamine reductase.